The sequence spans 271 residues: Imidazole glycerol phosphate synthase subunit HisF (271 aa).

Active-site residues include Asp-12 and Asp-136.

Belongs to the HisA/HisF family. In terms of assembly, heterodimer of HisH and HisF.

It localises to the cytoplasm. The enzyme catalyses 5-[(5-phospho-1-deoxy-D-ribulos-1-ylimino)methylamino]-1-(5-phospho-beta-D-ribosyl)imidazole-4-carboxamide + L-glutamine = D-erythro-1-(imidazol-4-yl)glycerol 3-phosphate + 5-amino-1-(5-phospho-beta-D-ribosyl)imidazole-4-carboxamide + L-glutamate + H(+). The protein operates within amino-acid biosynthesis; L-histidine biosynthesis; L-histidine from 5-phospho-alpha-D-ribose 1-diphosphate: step 5/9. Its function is as follows. IGPS catalyzes the conversion of PRFAR and glutamine to IGP, AICAR and glutamate. The HisF subunit catalyzes the cyclization activity that produces IGP and AICAR from PRFAR using the ammonia provided by the HisH subunit. The sequence is that of Imidazole glycerol phosphate synthase subunit HisF from Haloarcula marismortui (strain ATCC 43049 / DSM 3752 / JCM 8966 / VKM B-1809) (Halobacterium marismortui).